The chain runs to 425 residues: Glutamate-1-semialdehyde 2,1-aminomutase (425 aa).

K266 is subject to N6-(pyridoxal phosphate)lysine.

Belongs to the class-III pyridoxal-phosphate-dependent aminotransferase family. HemL subfamily. In terms of assembly, homodimer. Pyridoxal 5'-phosphate serves as cofactor.

The protein resides in the cytoplasm. The enzyme catalyses (S)-4-amino-5-oxopentanoate = 5-aminolevulinate. It functions in the pathway porphyrin-containing compound metabolism; protoporphyrin-IX biosynthesis; 5-aminolevulinate from L-glutamyl-tRNA(Glu): step 2/2. In Nitratidesulfovibrio vulgaris (strain DSM 19637 / Miyazaki F) (Desulfovibrio vulgaris), this protein is Glutamate-1-semialdehyde 2,1-aminomutase.